Consider the following 203-residue polypeptide: ATP-dependent Clp protease proteolytic subunit 1 (203 aa).

Serine 103 serves as the catalytic Nucleophile. The active site involves histidine 128.

It belongs to the peptidase S14 family. As to quaternary structure, fourteen ClpP subunits assemble into 2 heptameric rings which stack back to back to give a disk-like structure with a central cavity, resembling the structure of eukaryotic proteasomes.

It localises to the cytoplasm. It carries out the reaction Hydrolysis of proteins to small peptides in the presence of ATP and magnesium. alpha-casein is the usual test substrate. In the absence of ATP, only oligopeptides shorter than five residues are hydrolyzed (such as succinyl-Leu-Tyr-|-NHMec, and Leu-Tyr-Leu-|-Tyr-Trp, in which cleavage of the -Tyr-|-Leu- and -Tyr-|-Trp bonds also occurs).. In terms of biological role, cleaves peptides in various proteins in a process that requires ATP hydrolysis. Has a chymotrypsin-like activity. Plays a major role in the degradation of misfolded proteins. The protein is ATP-dependent Clp protease proteolytic subunit 1 of Treponema pallidum (strain Nichols).